The chain runs to 483 residues: Glutamate--tRNA ligase (483 aa).

The 'HIGH' region signature appears at 9–19 (PSPTGFLHIGN). Positions 253-257 (KLSKR) match the 'KMSKS' region motif. Lys256 is a binding site for ATP.

The protein belongs to the class-I aminoacyl-tRNA synthetase family. Glutamate--tRNA ligase type 1 subfamily. As to quaternary structure, monomer.

The protein resides in the cytoplasm. It carries out the reaction tRNA(Glu) + L-glutamate + ATP = L-glutamyl-tRNA(Glu) + AMP + diphosphate. Its function is as follows. Catalyzes the attachment of glutamate to tRNA(Glu) in a two-step reaction: glutamate is first activated by ATP to form Glu-AMP and then transferred to the acceptor end of tRNA(Glu). This is Glutamate--tRNA ligase from Mycoplasma capricolum subsp. capricolum (strain California kid / ATCC 27343 / NCTC 10154).